Here is a 238-residue protein sequence, read N- to C-terminus: Small proline-rich protein 3 (238 aa).

A disordered region spans residues 1–67; sequence MSSYQQKQPF…CSTKVPEPGN (67 aa). At Ser2 the chain carries N-acetylserine. Repeat copies occupy residues 52-59, 60-67, 68-75, 76-83, 84-91, 92-99, 100-107, 108-115, 116-123, 124-131, 132-139, 140-147, 148-155, 156-163, 164-175, 176-183, 184-191, 192-199, 200-207, 208-215, and 216-223. The tract at residues 52–223 is 21 X 8 AA approximate tandem repeats; sequence TKIPEPCSTK…CQSRVPEVCP (172 aa). The segment at 110–238 is disordered; it reads IPGPCSTNIP…VSAKQKTKQK (129 aa). Residues 163–175 are compositionally biased toward low complexity; that stretch reads PSSTSEPSSEPCS.

It belongs to the cornifin (SPRR) family.

It localises to the cytoplasm. Functionally, cross-linked envelope protein of keratinocytes. In Mus musculus (Mouse), this protein is Small proline-rich protein 3 (Sprr3).